Reading from the N-terminus, the 159-residue chain is NADH-quinone oxidoreductase subunit I (159 aa).

2 4Fe-4S ferredoxin-type domains span residues 51–80 and 90–119; these read RRYENGEERCIACKLCEAICPAQAIVIEAD and TRYDIDMTKCIYCGLCQEACPVDAIVEGPN. [4Fe-4S] cluster-binding residues include C60, C63, C66, C70, C99, C102, C105, and C109.

The protein belongs to the complex I 23 kDa subunit family. NDH-1 is composed of 14 different subunits. Subunits NuoA, H, J, K, L, M, N constitute the membrane sector of the complex. [4Fe-4S] cluster serves as cofactor.

It localises to the cell inner membrane. The enzyme catalyses a quinone + NADH + 5 H(+)(in) = a quinol + NAD(+) + 4 H(+)(out). NDH-1 shuttles electrons from NADH, via FMN and iron-sulfur (Fe-S) centers, to quinones in the respiratory chain. The immediate electron acceptor for the enzyme in this species is believed to be ubiquinone. Couples the redox reaction to proton translocation (for every two electrons transferred, four hydrogen ions are translocated across the cytoplasmic membrane), and thus conserves the redox energy in a proton gradient. This is NADH-quinone oxidoreductase subunit I from Rickettsia conorii (strain ATCC VR-613 / Malish 7).